The sequence spans 250 residues: L-ascorbate peroxidase 1, cytosolic (250 aa).

Histidine 42 (proton acceptor) is an active-site residue. Positions valine 113 to glycine 137 are disordered. Histidine 163 provides a ligand contact to heme b. K(+) is bound by residues threonine 164, threonine 180, asparagine 182, and aspartate 187.

It belongs to the peroxidase family. Ascorbate peroxidase subfamily. Requires heme b as cofactor.

Its subcellular location is the cytoplasm. The enzyme catalyses L-ascorbate + H2O2 = L-dehydroascorbate + 2 H2O. Plays a key role in hydrogen peroxide removal. In Oryza sativa subsp. indica (Rice), this protein is L-ascorbate peroxidase 1, cytosolic (APX1).